We begin with the raw amino-acid sequence, 173 residues long: Glycine cleavage system H protein, mitochondrial (173 aa).

A mitochondrion-targeting transit peptide spans 1–48 (MALRAVRSVRAAVGGLRAISAPSAPCLPRPWGLRAGAVRELRTGPALL). The Lipoyl-binding domain occupies 66–148 (VGTVGISNFA…YEDGWLIKMT (83 aa)). Residue lysine 107 is modified to N6-lipoyllysine.

This sequence belongs to the GcvH family. As to quaternary structure, interacts with GLDC. The glycine cleavage system is composed of four proteins: P (GLDC), T (GCST), L (DLD) and H (GCSH). The cofactor is (R)-lipoate.

Its subcellular location is the mitochondrion. The glycine cleavage system catalyzes the degradation of glycine. The H protein (GCSH) shuttles the methylamine group of glycine from the P protein (GLDC) to the T protein (GCST). Has a pivotal role in the lipoylation of enzymes involved in cellular energetics such as the mitochondrial dihydrolipoyllysine-residue acetyltransferase component of pyruvate dehydrogenase complex (DLAT), and the mitochondrial dihydrolipoyllysine-residue succinyltransferase component of 2-oxoglutarate dehydrogenase complex (DLST). This Bos taurus (Bovine) protein is Glycine cleavage system H protein, mitochondrial.